The chain runs to 472 residues: Phosphoenolpyruvate carboxykinase (ATP), glycosomal (472 aa).

221 to 228 (GLSGTGKT) serves as a coordination point for ATP.

It belongs to the phosphoenolpyruvate carboxykinase (ATP) family. In terms of assembly, homodimer.

The protein resides in the glycosome. It carries out the reaction oxaloacetate + ATP = phosphoenolpyruvate + ADP + CO2. It functions in the pathway carbohydrate biosynthesis; gluconeogenesis. Its function is as follows. P60 has the capability to bind to microtubules and membrane vesicles in vitro. In Trypanosoma brucei brucei, this protein is Phosphoenolpyruvate carboxykinase (ATP), glycosomal.